The chain runs to 348 residues: MTAPSQVLKIRRPDDWHLHLRDGDMLKTVMPYTSEIYGRAIVMPNLAPPVTTVEAAVAYRQRILDAVPAGHNFTPLMTCYLTDSLDPNELERGFNEGVFTAAKLYPANATTNSSHGVTSIDAIMPVLERMEKIGMPLLVHGEVTHADIDIFDREAHFIESVMEPLRQRLTALKVVFEHITTKDAADYVRDGNERLAATITPQHLMFNRNHMLVGGVRPHLYCLPILKRNIHQQALRELVASGFNRVFLGTDSAPHARHRKESSCGCAGCFNAPTALGSYATVFEEMNALQHFEAFCSVNGPQFYGLPVNDTFIELVREEQQVAESIALTDDTLVPFLAGETVRWSVKQ.

Positions 17 and 19 each coordinate Zn(2+). Substrate contacts are provided by residues His-19–Arg-21 and Asn-45. Zn(2+)-binding residues include Lys-103, His-140, and His-178. Lys-103 carries the post-translational modification N6-carboxylysine. Position 140 (His-140) interacts with substrate. Substrate is bound at residue Leu-223. Asp-251 provides a ligand contact to Zn(2+). Asp-251 is a catalytic residue. Residues His-255 and Ala-267 each coordinate substrate.

It belongs to the metallo-dependent hydrolases superfamily. DHOase family. Class II DHOase subfamily. As to quaternary structure, homodimer. Zn(2+) is required as a cofactor.

It catalyses the reaction (S)-dihydroorotate + H2O = N-carbamoyl-L-aspartate + H(+). The protein operates within pyrimidine metabolism; UMP biosynthesis via de novo pathway; (S)-dihydroorotate from bicarbonate: step 3/3. Catalyzes the reversible cyclization of carbamoyl aspartate to dihydroorotate. The polypeptide is Dihydroorotase (Shigella boydii serotype 4 (strain Sb227)).